The following is a 228-amino-acid chain: Urease accessory protein UreH (228 aa).

A run of 5 helical transmembrane segments spans residues 48-68 (VFWG…IILM), 79-99 (SLEF…ILSL), 130-150 (LFIG…LTMS), 162-182 (ILFF…LIGI), and 196-216 (AFIQ…MYNL).

Belongs to the NiCoT transporter (TC 2.A.52) family.

It is found in the cell membrane. Its function is as follows. Probably facilitates nickel incorporation. May constitute a multicomponent high-affinity nickel transporter. Not essential for the expression of catalytically active urease. This Bacillus sp. (strain TB-90) protein is Urease accessory protein UreH (ureH).